A 232-amino-acid polypeptide reads, in one-letter code: 7-cyano-7-deazaguanine synthase (232 aa).

An ATP-binding site is contributed by 7–17 (CSGGLDSVSLA). Residues C185, C193, C196, and C199 each coordinate Zn(2+).

This sequence belongs to the QueC family. Zn(2+) is required as a cofactor.

It carries out the reaction 7-carboxy-7-deazaguanine + NH4(+) + ATP = 7-cyano-7-deazaguanine + ADP + phosphate + H2O + H(+). It functions in the pathway purine metabolism; 7-cyano-7-deazaguanine biosynthesis. Functionally, catalyzes the ATP-dependent conversion of 7-carboxy-7-deazaguanine (CDG) to 7-cyano-7-deazaguanine (preQ(0)). This Chelativorans sp. (strain BNC1) protein is 7-cyano-7-deazaguanine synthase.